The following is a 483-amino-acid chain: Sodium/pantothenate symporter (483 aa).

Over 1 to 2 (MQ) the chain is Periplasmic. Residues 3 to 23 (LEVILPLVAYLVVVFGISVYA) form a helical membrane-spanning segment. The Cytoplasmic portion of the chain corresponds to 24-42 (MRKRSTGTFLNEYFLGSRS). The helical transmembrane segment at 43–63 (MGGIVLAMTLTATYISASSFI) threads the bilayer. At 64 to 73 (GGPGAAYKYG) the chain is on the periplasmic side. A helical transmembrane segment spans residues 74–94 (LGWVLLAMIQLPAVWLSLGIL). The Cytoplasmic segment spans residues 95–123 (GKKFAILARRYNAVTLNDMLFARYQSRLL). Residues 124–144 (VWLASLSLLVAFVGAMTVQFI) traverse the membrane as a helical segment. Residues 145–157 (GGARLLETAAGIP) lie on the Periplasmic side of the membrane. The chain crosses the membrane as a helical span at residues 158–178 (YETGLLIFGISIALYTAFGGF). At 179 to 189 (RASVLNDTMQG) the chain is on the cytoplasmic side. The chain crosses the membrane as a helical span at residues 190 to 210 (LVMLIGTVVLLIGVVHAAGGL). The Periplasmic portion of the chain corresponds to 211–232 (SNAVQTLQTIDPQLVTPQGADD). The chain crosses the membrane as a helical span at residues 233 to 253 (ILSPAFMTSFWVLVCFGVIGL). At 254-272 (PHTAVRCISYKDSKAVHRG) the chain is on the cytoplasmic side. The helical transmembrane segment at 273-293 (IIIGTIVVAILMFGMHLAGAL) threads the bilayer. The Periplasmic segment spans residues 294-305 (GRAVIPDLTVPD). The chain crosses the membrane as a helical span at residues 306–326 (LVIPTLMVKVLPPFAAGIFLA). Residues 327–368 (APMAAIMSTINAQLLQSSATIIKDLYLNIRPDQMQNETRLKR) are Cytoplasmic-facing. A helical transmembrane segment spans residues 369–389 (MSAVITLVLGALLLLAAWKPP). Residues 390-391 (EM) lie on the Periplasmic side of the membrane. The helical transmembrane segment at 392 to 412 (IIWLNLLAFGGLEAVFLWPLV) threads the bilayer. Over 413-423 (LGLYWERANAK) the chain is Cytoplasmic. Residues 424-444 (GALSAMIVGGVLYAVLATLNI) traverse the membrane as a helical segment. Position 445 (Gln445) is a topological domain, periplasmic. The helical transmembrane segment at 446–466 (YLGFHPIVPSLLLSLLAFLVG) threads the bilayer. Residues 467–483 (NRFGTSVPQATVLTTDK) lie on the Cytoplasmic side of the membrane.

It belongs to the sodium:solute symporter (SSF) (TC 2.A.21) family.

The protein localises to the cell inner membrane. It catalyses the reaction (R)-pantothenate(in) + Na(+)(in) = (R)-pantothenate(out) + Na(+)(out). With respect to regulation, pantothenate uptake is not reduced in osmotically shocked cells or by ATP depletion with arsenate, but is reduced greater than 90% by the dissipation of the membrane electrochemical gradient with 2,4-dinitrophenol. Functionally, catalyzes the sodium-dependent uptake of extracellular pantothenate. This chain is Sodium/pantothenate symporter, found in Escherichia coli (strain K12).